A 240-amino-acid polypeptide reads, in one-letter code: 6-phosphogluconolactonase (240 aa).

It belongs to the glucosamine/galactosamine-6-phosphate isomerase family. 6-phosphogluconolactonase subfamily.

It carries out the reaction 6-phospho-D-glucono-1,5-lactone + H2O = 6-phospho-D-gluconate + H(+). It functions in the pathway carbohydrate degradation; pentose phosphate pathway; D-ribulose 5-phosphate from D-glucose 6-phosphate (oxidative stage): step 2/3. Hydrolysis of 6-phosphogluconolactone to 6-phosphogluconate. This is 6-phosphogluconolactonase (pgl) from Synechocystis sp. (strain ATCC 27184 / PCC 6803 / Kazusa).